A 422-amino-acid polypeptide reads, in one-letter code: MGKAKVPASKRAPSSPVAKPGPVKTLTRKKNKKKKRFWKSKAREVSKKPASGPGAVVRPPKAPEDFSQNWKALQEWLLKQKSQAPEKPLVISQMGSKKKPKIIQQNKKETSPQVKGEEMPAGKDQEASRGSVPSGSKMDRRAPVPRTKASGTEHNKKGTKERTNGDIVPERGDIEHKKRKAKEAAPAPPTEEDIWFDDVDPADIEAAIGPEAAKIARKQLGQSEGSVSLSLVKEQAFGGLTRALALDCEMVGVGPKGEESMAARVSIVNQYGKCVYDKYVKPTEPVTDYRTAVSGIRPENLKQGEELEVVQKEVAEMLKGRILVGHALHNDLKVLFLDHPKKKIRDTQKYKPFKSQVKSGRPSLRLLSEKILGLQVQQAEHCSIQDAQAAMRLYVMVKKEWESMARDRRPLLTAPDHCSDDA.

Residues 1-194 (MGKAKVPASK…APAPPTEEDI (194 aa)) form a disordered region. Residue Ser-15 is modified to Phosphoserine. Over residues 26 to 40 (LTRKKNKKKKRFWKS) the composition is skewed to basic residues. Phosphoserine is present on residues Ser-96 and Ser-111. 2 stretches are compositionally biased toward basic and acidic residues: residues 106-127 (NKKETSPQVKGEEMPAGKDQEA) and 151-176 (GTEHNKKGTKERTNGDIVPERGDIEH). Lys-115 participates in a covalent cross-link: Glycyl lysine isopeptide (Lys-Gly) (interchain with G-Cter in SUMO2). Residues 243-394 (ALALDCEMVG…QDAQAAMRLY (152 aa)) form the Exonuclease domain.

This sequence belongs to the REXO4 family. As to quaternary structure, can bind ESR1 and ESR2. This interaction is abrogated by estrogen and augmented by tamoxifen treatment.

It is found in the nucleus. It localises to the nucleolus. The chain is RNA exonuclease 4 (REXO4) from Homo sapiens (Human).